The chain runs to 135 residues: MGNYLLRKLSCLGENQKKPKKGNPDEERKRQEMTTFERKLQDQDKKSQEVSSTSNQENENGSGSEEVCYTVINHIPHQRSSLSSNDDGYENIDSLTRKVRQFRERSETEYALLRTSVSRPCSCTHEHDYEVVFPH.

The tract at residues 1 to 68 is disordered; that stretch reads MGNYLLRKLS…ENGSGSEEVC (68 aa). The segment covering 22-48 has biased composition (basic and acidic residues); sequence GNPDEERKRQEMTTFERKLQDQDKKSQ. Residues 26 to 50 are a coiled coil; that stretch reads EERKRQEMTTFERKLQDQDKKSQEV. Low complexity predominate over residues 51-66; it reads SSTSNQENENGSGSEE.

This is Germinal center-associated signaling and motility-like protein (GCSAML) from Homo sapiens (Human).